Consider the following 301-residue polypeptide: Probable alpha-L-glutamate ligase (301 aa).

In terms of domain architecture, ATP-grasp spans 104–287 (MQLLSRKGIG…VAGLIVDFIE (184 aa)). ATP is bound by residues K141, 178–179 (EF), D187, and 211–213 (RSN). D248, E260, and N262 together coordinate Mg(2+). Mn(2+)-binding residues include D248, E260, and N262.

This sequence belongs to the RimK family. Mg(2+) serves as cofactor. It depends on Mn(2+) as a cofactor.

The sequence is that of Probable alpha-L-glutamate ligase from Aliivibrio salmonicida (strain LFI1238) (Vibrio salmonicida (strain LFI1238)).